Reading from the N-terminus, the 56-residue chain is Large ribosomal subunit protein eL24 (56 aa).

Positions 6, 9, 32, and 36 each coordinate Zn(2+). The C4-type zinc finger occupies 6–36 (CSFCNTRITPGTGKLYAKKDGTVYYFCSSKC).

Belongs to the eukaryotic ribosomal protein eL24 family. As to quaternary structure, part of the 50S ribosomal subunit. Forms a cluster with proteins L3 and L14. It depends on Zn(2+) as a cofactor.

In terms of biological role, binds to the 23S rRNA. The sequence is that of Large ribosomal subunit protein eL24 from Methanothrix thermoacetophila (strain DSM 6194 / JCM 14653 / NBRC 101360 / PT) (Methanosaeta thermophila).